Here is a 365-residue protein sequence, read N- to C-terminus: Probable receptor-like protein kinase At2g47060 (365 aa).

The disordered stretch occupies residues 18-48; it reads DYGGRHNQAKHFPPGNDARHHQASETAQKGP. A Protein kinase domain is found at 73–353; that stretch reads FGSNSLIGEG…IVVKALQPLL (281 aa). ATP contacts are provided by residues 79–87 and lysine 101; that span reads IGEGSYGRV. Tyrosine 145 carries the post-translational modification Phosphotyrosine. The active-site Proton acceptor is the aspartate 203. A phosphoserine mark is found at serine 207 and serine 237. Threonine 238 and threonine 243 each carry phosphothreonine. Tyrosine 251 is modified (phosphotyrosine).

It belongs to the protein kinase superfamily. Ser/Thr protein kinase family.

The enzyme catalyses L-seryl-[protein] + ATP = O-phospho-L-seryl-[protein] + ADP + H(+). The catalysed reaction is L-threonyl-[protein] + ATP = O-phospho-L-threonyl-[protein] + ADP + H(+). The sequence is that of Probable receptor-like protein kinase At2g47060 from Arabidopsis thaliana (Mouse-ear cress).